Reading from the N-terminus, the 128-residue chain is Adrenodoxin homolog (128 aa).

Residues 12-115 (EQIRIFFKTM…NAVFTVPRAT (104 aa)) form the 2Fe-2S ferredoxin-type domain. [2Fe-2S] cluster is bound by residues cysteine 50, cysteine 56, cysteine 59, and cysteine 96.

Belongs to the adrenodoxin/putidaredoxin family. [2Fe-2S] cluster is required as a cofactor.

It localises to the mitosome. Ferredoxins are iron-sulfur proteins that transfer electrons in a wide variety of metabolic reactions. The sequence is that of Adrenodoxin homolog from Encephalitozoon cuniculi (strain GB-M1) (Microsporidian parasite).